Consider the following 662-residue polypeptide: FAST kinase domain-containing protein 3, mitochondrial (662 aa).

The RAP domain maps to 591-649; the sequence is IALCIDGPKRFCSNSKHLLGKEAIKQRHLQLLGYQVVQIPYHEIGMLKSRRELVEYLQR.

This sequence belongs to the FAST kinase family. In terms of tissue distribution, expression detected in spleen, thymus, testis, ovary, colon, heart, smooth muscle, kidney, brain, lung, liver and white adipose tissue with highest expression in liver and thyroid.

The protein localises to the mitochondrion. Its function is as follows. Required for normal mitochondrial respiration. Increases steady-state levels and half-lives of a subset of mature mitochondrial mRNAs MT-ND2, MT-ND3, MT-CYTB, MT-CO2, and MT-ATP8/6. Promotes MT-CO1 mRNA translation and increases mitochondrial complex IV assembly and activity. This Homo sapiens (Human) protein is FAST kinase domain-containing protein 3, mitochondrial (FASTKD3).